The chain runs to 202 residues: Holliday junction branch migration complex subunit RuvA (202 aa).

The domain I stretch occupies residues 1–64; the sequence is MIDFLKGRLV…ETALEMFGFS (64 aa). Residues 65–143 form a domain II region; it reads SELDRTAFLL…KQQVAVSAEL (79 aa). Residues 144–152 form a flexible linker region; the sequence is PASDGVPVL. The interval 152–202 is domain III; that stretch reads LAGRAENEALAALISLGYTPREAREALNRLPDRKLDAAGLVHAALRIMGSQ.

It belongs to the RuvA family. In terms of assembly, homotetramer. Forms an RuvA(8)-RuvB(12)-Holliday junction (HJ) complex. HJ DNA is sandwiched between 2 RuvA tetramers; dsDNA enters through RuvA and exits via RuvB. An RuvB hexamer assembles on each DNA strand where it exits the tetramer. Each RuvB hexamer is contacted by two RuvA subunits (via domain III) on 2 adjacent RuvB subunits; this complex drives branch migration. In the full resolvosome a probable DNA-RuvA(4)-RuvB(12)-RuvC(2) complex forms which resolves the HJ.

It is found in the cytoplasm. In terms of biological role, the RuvA-RuvB-RuvC complex processes Holliday junction (HJ) DNA during genetic recombination and DNA repair, while the RuvA-RuvB complex plays an important role in the rescue of blocked DNA replication forks via replication fork reversal (RFR). RuvA specifically binds to HJ cruciform DNA, conferring on it an open structure. The RuvB hexamer acts as an ATP-dependent pump, pulling dsDNA into and through the RuvAB complex. HJ branch migration allows RuvC to scan DNA until it finds its consensus sequence, where it cleaves and resolves the cruciform DNA. The chain is Holliday junction branch migration complex subunit RuvA from Desulforudis audaxviator (strain MP104C).